Reading from the N-terminus, the 92-residue chain is Small ribosomal subunit protein bS18 (92 aa).

The protein belongs to the bacterial ribosomal protein bS18 family. In terms of assembly, part of the 30S ribosomal subunit. Forms a tight heterodimer with protein bS6.

Functionally, binds as a heterodimer with protein bS6 to the central domain of the 16S rRNA, where it helps stabilize the platform of the 30S subunit. The chain is Small ribosomal subunit protein bS18 from Cupriavidus taiwanensis (strain DSM 17343 / BCRC 17206 / CCUG 44338 / CIP 107171 / LMG 19424 / R1) (Ralstonia taiwanensis (strain LMG 19424)).